The chain runs to 610 residues: C4b-binding protein alpha chain (610 aa).

An N-terminal signal peptide occupies residues 1–48 (MKHQRVPVMILHSKGTMASWPFSRLWSISDPILFQVTLVATLLATVLG). 8 consecutive Sushi domains span residues 49–109 (SCGI…FCVK), 110–171 (KRCE…QCII), 172–236 (AKCE…SCKK), 237–296 (VICV…TCEL), 297–364 (NGCL…ECKE), 365–427 (VCCP…ECRP), 428–485 (DCKS…QCKA), and 486–543 (LCLK…KCEW). 16 disulfide bridges follow: Cys-50/Cys-95, Cys-80/Cys-107, Cys-112/Cys-153, Cys-139/Cys-169, Cys-174/Cys-217, Cys-203/Cys-234, Cys-239/Cys-281, Cys-267/Cys-294, Cys-299/Cys-350, Cys-334/Cys-362, Cys-367/Cys-412, Cys-402/Cys-425, Cys-429/Cys-471, Cys-457/Cys-483, Cys-487/Cys-528, and Cys-514/Cys-541. An N-linked (GlcNAc...) asparagine glycan is attached at Asn-66. N-linked (GlcNAc...) asparagine glycosylation occurs at Asn-221. N-linked (GlcNAc...) asparagine glycans are attached at residues Asn-525 and Asn-602.

As to quaternary structure, disulfide-linked complex of alpha and beta chains.

It localises to the secreted. Its function is as follows. Controls the classical pathway of complement activation. It binds as a cofactor to C3b/C4b inactivator (C3bINA), which then hydrolyzes the complement fragment C4b. It also accelerates the degradation of the C4bC2a complex (C3 convertase) by dissociating the complement fragment C2a. Alpha chain binds C4b. It also interacts with serum amyloid P component. This Bos taurus (Bovine) protein is C4b-binding protein alpha chain (C4BPA).